The chain runs to 413 residues: Putative F-box/kelch-repeat protein At3g22870 (413 aa).

The region spanning 2 to 53 (TLTISDLPRDLKKKIFSRIPLRYVRALRLTCKEWETLIKSRSLKIDEEESQM) is the F-box domain. Kelch repeat units follow at residues 156-202 (LLRF…IGVS) and 331-379 (KVFI…RRRQ).

The polypeptide is Putative F-box/kelch-repeat protein At3g22870 (Arabidopsis thaliana (Mouse-ear cress)).